We begin with the raw amino-acid sequence, 2271 residues long: Serine-rich adhesin for platelets (2271 aa).

An N-terminal signal peptide occupies residues 1 to 89; the sequence is MSKRQKAFHD…VNMLHDQQAF (89 aa). The serine-rich repeat region 1, SRR1 stretch occupies residues 90 to 230; it reads AASDAPLTSE…KTSTTSTSTA (141 aa). Polar residues predominate over residues 100–111; that stretch reads LNTQSETVGNQN. Disordered regions lie at residues 100 to 229, 751 to 791, and 806 to 2243; these read LNTQ…STST, NSMS…VVST, and SVSA…GLLG. Over residues 112-128 the composition is skewed to low complexity; sequence STTIEASTSTADSTSVT. The segment covering 129–140 has biased composition (polar residues); sequence KNSSSVQTSNSD. Over residues 150–229 the composition is skewed to low complexity; the sequence is VTSTTNSTSN…NKTSTTSTST (80 aa). The interval 231-751 is non-repeat region (NRR); that stretch reads PVKLRTFSRL…TTFKYEVTRN (521 aa). 3 stretches are compositionally biased toward low complexity: residues 752-791, 806-1392, and 1402-2214; these read SMSD…VVST, SVSA…LSLS, and SNSA…ATSE. A serine-rich repeat region 2, SRR2 region spans residues 752 to 2232; sequence SMSDSVSTSG…AQSEKRLPDT (1481 aa). The LPXTG sorting signal motif lies at 2229–2233; it reads LPDTG. The residue at position 2232 (Thr-2232) is a Pentaglycyl murein peptidoglycan amidated threonine. A propeptide spans 2233-2271 (removed by sortase); sequence GDSIKQNGLLGGVMTLLVGLGLMKRKKKKDENDQDDSQA.

This sequence belongs to the serine-rich repeat protein (SRRP) family. Proteolytically cleaved by a metalloprotease. In terms of processing, glycosylated. It is probable that most of the Ser residues in SSR1 and SSR2 are O-GlcNAcylated. Sequential glycosylation by sugar transferases are able to generate complex sugar polymorphisms.

It localises to the secreted. Its subcellular location is the cell wall. In terms of biological role, mediates binding to human platelets, possibly through a receptor-ligand interaction. Probably associated with virulence in endovascular infection. The chain is Serine-rich adhesin for platelets (sraP) from Staphylococcus aureus (strain USA300).